The sequence spans 690 residues: NF-kappa-B-repressing factor (690 aa).

Residues M1–V296 are active repression domain. A Nuclear localization signal motif is present at residues K25–K45. Disordered regions lie at residues S27 to T87 and M132 to P163. A Glycyl lysine isopeptide (Lys-Gly) (interchain with G-Cter in SUMO2) cross-link involves residue K68. A compositionally biased stretch (low complexity) spans S142 to P163. A DNA-binding region spans residues V296–A388. A compositionally biased stretch (polar residues) spans P414 to R431. The disordered stretch occupies residues P414–K437. Residue K500 forms a Glycyl lysine isopeptide (Lys-Gly) (interchain with G-Cter in SUMO2) linkage. The 46-residue stretch at E551 to E596 folds into the G-patch domain. Residues K600 to R664 form the R3H domain. Residue S618 is modified to Phosphoserine. Residues K666 and K674 each participate in a glycyl lysine isopeptide (Lys-Gly) (interchain with G-Cter in SUMO2) cross-link.

In terms of assembly, interacts with NF-kappa-B. Interacts with XRN2. Interacts (via G-patch domain) with DHX15; promoting the RNA helicase activity of DHX15. In terms of tissue distribution, widely and constitutively expressed. Expressed at lower level in colon, peripheral blood lymphocytes, lung and kidney.

The protein resides in the nucleus. Its subcellular location is the nucleolus. Enhances the ATPase activity of DHX15 by acting like a brace that tethers mobile sections of DHX15 together, stabilizing a functional conformation with high RNA affinity of DHX15. Involved in the constitutive silencing of the interferon beta promoter, independently of the virus-induced signals, and in the inhibition of the basal and cytokine-induced iNOS promoter activity. Also involved in the regulation of IL-8 transcription. May also act as a DNA-binding transcription regulator: interacts with a specific negative regulatory element (NRE) 5'-AATTCCTCTGA-3' to mediate transcriptional repression of certain NK-kappa-B responsive genes. The protein is NF-kappa-B-repressing factor of Homo sapiens (Human).